Consider the following 893-residue polypeptide: Genome polyprotein 2 (893 aa).

The Peptidase C6 domain maps to 109–229 (TAEFKSGFCY…GCEYMLYPVG (121 aa)). Residues Cys117 and His189 each act as for helper component proteinase activity in the active site. The disordered stretch occupies residues 502–539 (WVTLNSGDDDDDQSGGGGGGPQTPGGQPPVPHTRGTHQ). The span at 515-524 (SGGGGGGPQT) shows a compositional bias: gly residues.

The protein belongs to the bymoviruses polyprotein 2 family. Post-translationally, the viral RNA2 of bymoviruses is expressed as a single polyprotein which undergoes post-translational proteolytic processing resulting in the production of at least two individual proteins. The HC-pro cleaves its C-terminus autocatalytically (Potential).

The enzyme catalyses Hydrolyzes a Gly-|-Gly bond at its own C-terminus, commonly in the sequence -Tyr-Xaa-Val-Gly-|-Gly, in the processing of the potyviral polyprotein.. This chain is Genome polyprotein 2 (RNA2), found in Barley mild mosaic virus (strain ASL) (BaMMV).